The primary structure comprises 381 residues: Ubiquitin-associated protein 1-like (381 aa).

Residues 4–50 (LDGVPFKLPKGFVIGTEPLPGPELSVPACGEVLLGSMHDFSLERTAL) enclose the UMA domain. 2 disordered regions span residues 87-141 (LAPA…PGRR) and 185-228 (SLCP…LRSH). The span at 95-104 (RDPEAGHQER) shows a compositional bias: basic and acidic residues. Over residues 105 to 123 (PEEEGEDEAEASSGSEEEP) the composition is skewed to acidic residues. Residues 124–141 (APSSLQPGSPASPGPGRR) show a composition bias toward low complexity. The segment covering 197 to 216 (ASPPGPAPQHPAAPASPPRP) has biased composition (pro residues).

The chain is Ubiquitin-associated protein 1-like (UBAP1L) from Homo sapiens (Human).